We begin with the raw amino-acid sequence, 162 residues long: Endoribonuclease YbeY (162 aa).

Zn(2+) contacts are provided by H117, H121, and H127.

The protein belongs to the endoribonuclease YbeY family. Zn(2+) serves as cofactor.

The protein resides in the cytoplasm. Its function is as follows. Single strand-specific metallo-endoribonuclease involved in late-stage 70S ribosome quality control and in maturation of the 3' terminus of the 16S rRNA. The polypeptide is Endoribonuclease YbeY (Francisella tularensis subsp. mediasiatica (strain FSC147)).